The chain runs to 253 residues: Probable transcriptional regulatory protein RAF_ORF0717 (253 aa).

Positions 1 to 21 (MAGHSKFKNIQHRKGAQDKKR) are disordered.

It belongs to the TACO1 family.

It localises to the cytoplasm. In Rickettsia africae (strain ESF-5), this protein is Probable transcriptional regulatory protein RAF_ORF0717.